The chain runs to 138 residues: ATP synthase epsilon chain (138 aa).

It belongs to the ATPase epsilon chain family. As to quaternary structure, F-type ATPases have 2 components, CF(1) - the catalytic core - and CF(0) - the membrane proton channel. CF(1) has five subunits: alpha(3), beta(3), gamma(1), delta(1), epsilon(1). CF(0) has three main subunits: a, b and c.

It is found in the cell membrane. In terms of biological role, produces ATP from ADP in the presence of a proton gradient across the membrane. This chain is ATP synthase epsilon chain (atpC), found in Buchnera aphidicola subsp. Schizaphis graminum (strain Sg).